The primary structure comprises 244 residues: 1-(5-phosphoribosyl)-5-[(5-phosphoribosylamino)methylideneamino] imidazole-4-carboxamide isomerase (244 aa).

Residue Asp-10 is the Proton acceptor of the active site. The active-site Proton donor is the Asp-129.

Belongs to the HisA/HisF family.

The protein localises to the cytoplasm. It carries out the reaction 1-(5-phospho-beta-D-ribosyl)-5-[(5-phospho-beta-D-ribosylamino)methylideneamino]imidazole-4-carboxamide = 5-[(5-phospho-1-deoxy-D-ribulos-1-ylimino)methylamino]-1-(5-phospho-beta-D-ribosyl)imidazole-4-carboxamide. The protein operates within amino-acid biosynthesis; L-histidine biosynthesis; L-histidine from 5-phospho-alpha-D-ribose 1-diphosphate: step 4/9. The polypeptide is 1-(5-phosphoribosyl)-5-[(5-phosphoribosylamino)methylideneamino] imidazole-4-carboxamide isomerase (Rhodococcus erythropolis (strain PR4 / NBRC 100887)).